We begin with the raw amino-acid sequence, 747 residues long: NAD-dependent protein deacetylase sirtuin-1 (747 aa).

Positions 1–135 (MADEAALALQ…DDEGEEEEEA (135 aa)) are disordered. Ala-2 carries the post-translational modification N-acetylalanine. Residues 2–139 (ADEAALALQP…EEEEEAAAAA (138 aa)) form an interaction with CLOCK region. Residues 2-268 (ADEAALALQP…LTGAGVSVSC (267 aa)) are interaction with H1-4. Phosphoserine is present on residues Ser-14 and Ser-26. Residue Ser-27 is modified to Phosphoserine; by MAPK8. The short motif at 32 to 39 (PLRKRPRR) is the Nuclear localization signal element. Phosphoserine; by MAPK8 is present on Ser-47. Low complexity predominate over residues 61-100 (PAAARGCPGAAAAALWREAEAEAAAAGGEQEAQATAAAGE). Positions 120–135 (LYDEDDDDEGEEEEEA) are enriched in acidic residues. Positions 138–145 (AAIGYRDN) match the Nuclear export signal motif. Positions 143–541 (RDNLLFGDEI…LHVSEDSSSP (399 aa)) are interaction with CCAR2. A phosphoserine mark is found at Ser-159, Ser-162, Ser-172, and Ser-173. A Nuclear localization signal motif is present at residues 223 to 230 (IVINILSE). Positions 236–496 (KRKDINTIED…NELCHRLGGE (261 aa)) constitute a Deacetylase sirtuin-type domain. At Lys-238 the chain carries N6-acetyllysine. The required for interaction with the sumoylated form of CCAR2 stretch occupies residues 256–259 (IIVL). Residues 261 to 280 (GAGVSVSCGIPDFRSRDGIY) and 345 to 348 (QNID) each bind NAD(+). His-363 serves as the catalytic Proton acceptor. Residues Cys-371 and Cys-374 each coordinate Zn(2+). Lys-377 is modified (N6-acetyllysine). Zn(2+)-binding residues include Cys-395 and Cys-398. Cys-395 and Cys-398 each carry S-nitrosocysteine. The Nuclear export signal motif lies at 425 to 431 (AMKYDKD). The residue at position 430 (Lys-430) is an N6-acetyllysine. NAD(+) contacts are provided by residues 440-442 (GSS), 465-467 (NRE), and Cys-482. At Lys-513 the chain carries N6-acetyllysine. Disordered stretches follow at residues 523–549 (YLSELPPTPLHVSEDSSSPERTSPPDS) and 562–587 (SNDDLDVSESKGCMEEKPQEVQTSRN). At Thr-530 the chain carries Phosphothreonine; by DYRK1A, DYRK3 and MAPK8. Ser-535 bears the Phosphoserine mark. The segment covering 537–549 (DSSSPERTSPPDS) has biased composition (polar residues). The segment at 538–540 (SSS) is phosphorylated at one of three serine residues. Thr-544 is subject to Phosphothreonine. Phosphoserine is present on Ser-545. Over residues 569–580 (SESKGCMEEKPQ) the composition is skewed to basic and acidic residues. Lys-610 is modified (N6-acetyllysine). Phosphoserine; by CaMK2 is present on residues Ser-659 and Ser-661. The segment at 663-726 (DDVLSSSSCG…FGTDGDDQEA (64 aa)) is disordered. Over residues 666–677 (LSSSSCGSNSDS) the composition is skewed to low complexity. Residues 687-707 (EPMEDESEIEEFYNGLEDEPD) show a composition bias toward acidic residues. Thr-719 is subject to Phosphothreonine. Position 747 is a phosphoserine (Ser-747).

This sequence belongs to the sirtuin family. Class I subfamily. Interacts with XBP1 isoform 2. Found in a complex with PCAF and MYOD1. Interacts with FOXO1; the interaction deacetylates FOXO1, resulting in its nuclear retention and promotion of its transcriptional activity Component of the eNoSC complex, composed of SIRT1, SUV39H1 and RRP8. Interacts with HES1, HEY2 and PML. Interacts with RPS19BP1/AROS. Interacts with CCAR2 (via N-terminus); the interaction disrupts the interaction between SIRT1 and p53/TP53. Interacts with SETD7; the interaction induces the dissociation of SIRT1 from p53/TP53 and increases p53/TP53 activity. Interacts with MYCN, NR1I2, CREBZF, TSC2, TLE1, FOS, JUN, NR0B2, PPARG, NCOR, IRS1, IRS2 and NMNAT1. Interacts with HNF1A; the interaction occurs under nutrient restriction. Interacts with SUZ12; the interaction mediates the association with the PRC4 histone methylation complex which is specific as an association with PCR2 and PCR3 complex variants is not found. Interacts with BCL6; leads to a epigenetic repression of specific target genes. Interacts with CLOCK, BMAL1 and PER2. Interacts with PPARA; the interaction seems to be modulated by NAD(+) levels. Interacts with NR1H3 and this interaction is inhibited in the presence of CCAR2. Interacts with CHEK2. Interacts with p53/TP53. Exhibits a preferential interaction with sumoylated CCAR2 over its unmodified form. Interacts with PACS2. Interacts with SIRT7. Interacts with PUS7. Interacts with TULP3. Interacts with MORN3; the interaction enhances the ubiquitination of p53/TP53. As to quaternary structure, (Microbial infection) Interacts with HIV-1 Tat. Zn(2+) is required as a cofactor. Methylated on multiple lysine residues; methylation is enhanced after DNA damage and is dispensable for deacetylase activity toward p53/TP53. Post-translationally, phosphorylated. Phosphorylated by STK4/MST1, resulting in inhibition of SIRT1-mediated p53/TP53 deacetylation. Phosphorylation by MAPK8/JNK1 at Ser-27, Ser-47, and Thr-530 leads to increased nuclear localization and enzymatic activity. Phosphorylation at Thr-530 by DYRK1A and DYRK3 activates deacetylase activity and promotes cell survival. Phosphorylation by mammalian target of rapamycin complex 1 (mTORC1) at Ser-47 inhibits deacetylation activity. Phosphorylated by CaMK2, leading to increased p53/TP53 and NF-kappa-B p65/RELA deacetylation activity. Phosphorylation at Ser-27 implicating MAPK9 is linked to protein stability. There is some ambiguity for some phosphosites: Ser-159/Ser-162 and Thr-544/Ser-545. In terms of processing, proteolytically cleaved by cathepsin B upon TNF-alpha treatment to yield catalytic inactive but stable SirtT1 75 kDa fragment (75SirT1). S-nitrosylated by GAPDH, leading to inhibit the NAD-dependent protein deacetylase activity. Post-translationally, acetylated at various Lys residues. Deacetylated via an autocatalytic mechanism. Autodeacetylation at Lys-238 promotes its protein deacetylase activity. In terms of processing, ubiquitinated; leading to degradation. Deubiquitinated by USP22; leading to stabilization. As to expression, widely expressed.

Its subcellular location is the nucleus. The protein localises to the PML body. The protein resides in the cytoplasm. It is found in the mitochondrion. The catalysed reaction is N(6)-acetyl-L-lysyl-[protein] + NAD(+) + H2O = 2''-O-acetyl-ADP-D-ribose + nicotinamide + L-lysyl-[protein]. It carries out the reaction N(6)-propanoyl-L-lysyl-[protein] + NAD(+) + H2O = 3''-O-propanoyl-ADP-D-ribose + nicotinamide + L-lysyl-[protein]. The enzyme catalyses N(6)-(2E)-butenoyl-L-lysyl-[protein] + NAD(+) + H2O = 2''-O-(2E)-but-2-enoyl-ADP-D-ribose + nicotinamide + L-lysyl-[protein]. It catalyses the reaction N(6)-[(S)-lactoyl]-L-lysyl-[protein] + NAD(+) + H2O = 2''-O-(S)-lactoyl-ADP-D-ribose + nicotinamide + L-lysyl-[protein]. Its activity is regulated as follows. Inhibited by nicotinamide. Activated by resveratrol (3,5,4'-trihydroxy-trans-stilbene), butein (3,4,2',4'-tetrahydroxychalcone), piceatannol (3,5,3',4'-tetrahydroxy-trans-stilbene), Isoliquiritigenin (4,2',4'-trihydroxychalcone), fisetin (3,7,3',4'-tetrahydroxyflavone) and quercetin (3,5,7,3',4'-pentahydroxyflavone). MAPK8/JNK1 and RPS19BP1/AROS act as positive regulators of deacetylation activity. Negatively regulated by CCAR2. Functionally, NAD-dependent protein deacetylase that links transcriptional regulation directly to intracellular energetics and participates in the coordination of several separated cellular functions such as cell cycle, response to DNA damage, metabolism, apoptosis and autophagy. Can modulate chromatin function through deacetylation of histones and can promote alterations in the methylation of histones and DNA, leading to transcriptional repression. Deacetylates a broad range of transcription factors and coregulators, thereby regulating target gene expression positively and negatively. Serves as a sensor of the cytosolic ratio of NAD(+)/NADH which is altered by glucose deprivation and metabolic changes associated with caloric restriction. Is essential in skeletal muscle cell differentiation and in response to low nutrients mediates the inhibitory effect on skeletal myoblast differentiation which also involves 5'-AMP-activated protein kinase (AMPK) and nicotinamide phosphoribosyltransferase (NAMPT). Component of the eNoSC (energy-dependent nucleolar silencing) complex, a complex that mediates silencing of rDNA in response to intracellular energy status and acts by recruiting histone-modifying enzymes. The eNoSC complex is able to sense the energy status of cell: upon glucose starvation, elevation of NAD(+)/NADP(+) ratio activates SIRT1, leading to histone H3 deacetylation followed by dimethylation of H3 at 'Lys-9' (H3K9me2) by SUV39H1 and the formation of silent chromatin in the rDNA locus. Deacetylates 'Lys-266' of SUV39H1, leading to its activation. Inhibits skeletal muscle differentiation by deacetylating PCAF and MYOD1. Deacetylates H2A and 'Lys-26' of H1-4. Deacetylates 'Lys-16' of histone H4 (in vitro). Involved in NR0B2/SHP corepression function through chromatin remodeling: Recruited to LRH1 target gene promoters by NR0B2/SHP thereby stimulating histone H3 and H4 deacetylation leading to transcriptional repression. Proposed to contribute to genomic integrity via positive regulation of telomere length; however, reports on localization to pericentromeric heterochromatin are conflicting. Proposed to play a role in constitutive heterochromatin (CH) formation and/or maintenance through regulation of the available pool of nuclear SUV39H1. Upon oxidative/metabolic stress decreases SUV39H1 degradation by inhibiting SUV39H1 polyubiquitination by MDM2. This increase in SUV39H1 levels enhances SUV39H1 turnover in CH, which in turn seems to accelerate renewal of the heterochromatin which correlates with greater genomic integrity during stress response. Deacetylates 'Lys-382' of p53/TP53 and impairs its ability to induce transcription-dependent proapoptotic program and modulate cell senescence. Deacetylates TAF1B and thereby represses rDNA transcription by the RNA polymerase I. Deacetylates MYC, promotes the association of MYC with MAX and decreases MYC stability leading to compromised transformational capability. Deacetylates FOXO3 in response to oxidative stress thereby increasing its ability to induce cell cycle arrest and resistance to oxidative stress but inhibiting FOXO3-mediated induction of apoptosis transcriptional activity; also leading to FOXO3 ubiquitination and protesomal degradation. Appears to have a similar effect on MLLT7/FOXO4 in regulation of transcriptional activity and apoptosis. Deacetylates DNMT1; thereby impairs DNMT1 methyltransferase-independent transcription repressor activity, modulates DNMT1 cell cycle regulatory function and DNMT1-mediated gene silencing. Deacetylates RELA/NF-kappa-B p65 thereby inhibiting its transactivating potential and augments apoptosis in response to TNF-alpha. Deacetylates HIF1A, KAT5/TIP60, RB1 and HIC1. Deacetylates FOXO1 resulting in its nuclear retention and enhancement of its transcriptional activity leading to increased gluconeogenesis in liver. Inhibits E2F1 transcriptional activity and apoptotic function, possibly by deacetylation. Involved in HES1- and HEY2-mediated transcriptional repression. In cooperation with MYCN seems to be involved in transcriptional repression of DUSP6/MAPK3 leading to MYCN stabilization by phosphorylation at 'Ser-62'. Deacetylates MEF2D. Required for antagonist-mediated transcription suppression of AR-dependent genes which may be linked to local deacetylation of histone H3. Represses HNF1A-mediated transcription. Required for the repression of ESRRG by CREBZF. Deacetylates NR1H3 and NR1H2 and deacetylation of NR1H3 at 'Lys-434' positively regulates transcription of NR1H3:RXR target genes, promotes NR1H3 proteasomal degradation and results in cholesterol efflux; a promoter clearing mechanism after reach round of transcription is proposed. Involved in lipid metabolism: deacetylates LPIN1, thereby inhibiting diacylglycerol synthesis. Implicated in regulation of adipogenesis and fat mobilization in white adipocytes by repression of PPARG which probably involves association with NCOR1 and SMRT/NCOR2. Deacetylates p300/EP300 and PRMT1. Deacetylates ACSS2 leading to its activation, and HMGCS1 deacetylation. Involved in liver and muscle metabolism. Through deacetylation and activation of PPARGC1A is required to activate fatty acid oxidation in skeletal muscle under low-glucose conditions and is involved in glucose homeostasis. Involved in regulation of PPARA and fatty acid beta-oxidation in liver. Involved in positive regulation of insulin secretion in pancreatic beta cells in response to glucose; the function seems to imply transcriptional repression of UCP2. Proposed to deacetylate IRS2 thereby facilitating its insulin-induced tyrosine phosphorylation. Deacetylates SREBF1 isoform SREBP-1C thereby decreasing its stability and transactivation in lipogenic gene expression. Involved in DNA damage response by repressing genes which are involved in DNA repair, such as XPC and TP73, deacetylating XRCC6/Ku70, and facilitating recruitment of additional factors to sites of damaged DNA, such as SIRT1-deacetylated NBN can recruit ATM to initiate DNA repair and SIRT1-deacetylated XPA interacts with RPA2. Also involved in DNA repair of DNA double-strand breaks by homologous recombination and specifically single-strand annealing independently of XRCC6/Ku70 and NBN. Promotes DNA double-strand breaks by mediating deacetylation of SIRT6. Transcriptional suppression of XPC probably involves an E2F4:RBL2 suppressor complex and protein kinase B (AKT) signaling. Transcriptional suppression of TP73 probably involves E2F4 and PCAF. Deacetylates WRN thereby regulating its helicase and exonuclease activities and regulates WRN nuclear translocation in response to DNA damage. Deacetylates APEX1 at 'Lys-6' and 'Lys-7' and stimulates cellular AP endonuclease activity by promoting the association of APEX1 to XRCC1. Catalyzes deacetylation of ERCC4/XPF, thereby impairing interaction with ERCC1 and nucleotide excision repair (NER). Increases p53/TP53-mediated transcription-independent apoptosis by blocking nuclear translocation of cytoplasmic p53/TP53 and probably redirecting it to mitochondria. Deacetylates XRCC6/Ku70 at 'Lys-539' and 'Lys-542' causing it to sequester BAX away from mitochondria thereby inhibiting stress-induced apoptosis. Is involved in autophagy, presumably by deacetylating ATG5, ATG7 and MAP1LC3B/ATG8. Deacetylates AKT1 which leads to enhanced binding of AKT1 and PDK1 to PIP3 and promotes their activation. Proposed to play role in regulation of STK11/LBK1-dependent AMPK signaling pathways implicated in cellular senescence which seems to involve the regulation of the acetylation status of STK11/LBK1. Can deacetylate STK11/LBK1 and thereby increase its activity, cytoplasmic localization and association with STRAD; however, the relevance of such activity in normal cells is unclear. In endothelial cells is shown to inhibit STK11/LBK1 activity and to promote its degradation. Deacetylates SMAD7 at 'Lys-64' and 'Lys-70' thereby promoting its degradation. Deacetylates CIITA and augments its MHC class II transactivation and contributes to its stability. Deacetylates MECOM/EVI1. Deacetylates PML at 'Lys-487' and this deacetylation promotes PML control of PER2 nuclear localization. During the neurogenic transition, represses selective NOTCH1-target genes through histone deacetylation in a BCL6-dependent manner and leading to neuronal differentiation. Regulates the circadian expression of several core clock genes, including BMAL1, RORC, PER2 and CRY1 and plays a critical role in maintaining a controlled rhythmicity in histone acetylation, thereby contributing to circadian chromatin remodeling. Deacetylates BMAL1 and histones at the circadian gene promoters in order to facilitate repression by inhibitory components of the circadian oscillator. Deacetylates PER2, facilitating its ubiquitination and degradation by the proteasome. Protects cardiomyocytes against palmitate-induced apoptosis. Deacetylates XBP1 isoform 2; deacetylation decreases protein stability of XBP1 isoform 2 and inhibits its transcriptional activity. Deacetylates PCK1 and directs its activity toward phosphoenolpyruvate production promoting gluconeogenesis. Involved in the CCAR2-mediated regulation of PCK1 and NR1D1. Deacetylates CTNB1 at 'Lys-49'. In POMC (pro-opiomelanocortin) neurons, required for leptin-induced activation of PI3K signaling. Deacetylates SOX9; promoting SOX9 nuclear localization and transactivation activity. Involved in the regulation of centrosome duplication: deacetylates CENATAC in G1 phase, allowing for SASS6 accumulation on the centrosome and subsequent procentriole assembly. Deacetylates NDC80/HEC1. In addition to protein deacetylase activity, also acts as a protein-lysine deacylase by mediating protein delactylation, depropionylation and decrotonylation. Mediates depropionylation of Osterix (SP7). Catalyzes decrotonylation of histones; it however does not represent a major histone decrotonylase. Mediates protein delactylation of TEAD1 and YAP1. In terms of biological role, deacetylates 'Lys-382' of p53/TP53, however with lower activity than isoform 1. In combination, the two isoforms exert an additive effect. Isoform 2 regulates p53/TP53 expression and cellular stress response and is in turn repressed by p53/TP53 presenting a SIRT1 isoform-dependent auto-regulatory loop. Its function is as follows. Catalytically inactive 75SirT1 may be involved in regulation of apoptosis. May be involved in protecting chondrocytes from apoptotic death by associating with cytochrome C and interfering with apoptosome assembly. (Microbial infection) In case of HIV-1 infection, interacts with and deacetylates the viral Tat protein. The viral Tat protein inhibits SIRT1 deacetylation activity toward RELA/NF-kappa-B p65, thereby potentiates its transcriptional activity and SIRT1 is proposed to contribute to T-cell hyperactivation during infection. The protein is NAD-dependent protein deacetylase sirtuin-1 of Homo sapiens (Human).